The following is a 90-amino-acid chain: Probable Fe(2+)-trafficking protein (90 aa).

Belongs to the Fe(2+)-trafficking protein family.

In terms of biological role, could be a mediator in iron transactions between iron acquisition and iron-requiring processes, such as synthesis and/or repair of Fe-S clusters in biosynthetic enzymes. The polypeptide is Probable Fe(2+)-trafficking protein (Vibrio parahaemolyticus serotype O3:K6 (strain RIMD 2210633)).